The chain runs to 868 residues: V-set and immunoglobulin domain-containing protein 10-like (868 aa).

Positions 1 to 27 (MGLSWALLPFLLLAFRAELLALQPALG) are cleaved as a signal peptide. Over residues 26 to 52 (LGSQPPSASSSHSMGSSRDFVSNVSSS) the composition is skewed to low complexity. The tract at residues 26 to 82 (LGSQPPSASSSHSMGSSRDFVSNVSSSQHPQPPGSEASAGIPDSNRFPQGLNSSHVP) is disordered. The Extracellular portion of the chain corresponds to 28 to 763 (SQPPSASSSH…QAGSDLSPGA (736 aa)). N-linked (GlcNAc...) asparagine glycosylation is found at N48, N77, and N88. Over residues 71-80 (RFPQGLNSSH) the composition is skewed to polar residues. 2 disordered regions span residues 96-154 (LSPD…SGSK) and 323-342 (WSRD…EPPR). Polar residues-rich tracts occupy residues 99–108 (DVTSSETPPS) and 133–143 (PASQISVQTPD). Ig-like C2-type domains are found at residues 289 to 381 (PQLS…ADVS) and 389 to 474 (PVIR…SVFN). A disulfide bridge links C311 with C365. A glycan (N-linked (GlcNAc...) asparagine) is linked at N410. A disulfide bridge links C415 with C458. N-linked (GlcNAc...) asparagine glycosylation is found at N474, N628, and N637. Residues 764-784 (IAGIVLGSLLGLALLAGLLIL) traverse the membrane as a helical segment. Topologically, residues 785-868 (CICCLRRYPG…PWTVRAATQV (84 aa)) are cytoplasmic.

The protein localises to the membrane. In Mus musculus (Mouse), this protein is V-set and immunoglobulin domain-containing protein 10-like (Vsig10l).